Here is a 386-residue protein sequence, read N- to C-terminus: CRISPR system endoribonuclease Csm6' (386 aa).

Positions 1–146 are CARF domain; it reads MRVLISAVGD…ASNENIGHDN (146 aa). The HEPN domain stretch occupies residues 147-386; that stretch reads DENIDELIEV…LNKILLTKLN (240 aa).

The protein belongs to the CRISPR-associated Csm6 family. Homodimer. The composite ssRNase active site is formed at the dimer interface.

Its activity is regulated as follows. Non-specific ssRNase activity is stimulated about 1000-fold by cyclic oligoadenylate (cOA), a second messenger produced by Cas10 of the ternary Csm effector complex in the presence of a cognate target RNA. CRISPR (clustered regularly interspaced short palindromic repeat) is an adaptive immune system that provides protection against mobile genetic elements (viruses, transposable elements and conjugative plasmids). CRISPR clusters contain spacers, sequences complementary to antecedent mobile elements, and target invading nucleic acids. CRISPR clusters are transcribed and processed into CRISPR RNA (crRNA). The type III-A Csm complex binds crRNA and acts as a crRNA-guided RNase, DNase and cyclic oligoadenylate synthase; binding of target RNA cognate to the crRNA is required for all activities. In a heterologous host this Csm effector complex restricts ssRNA phage MS2, suggesting it may target RNA viruses in vivo. This protein is not part of the Csm complex. In terms of biological role, csm functions as a non-specific ssDNase. Base-pairing between crRNA and target RNA to form a ternary Csm complex activates a ssDNase activity; target RNA cleavage suppresses the ssDNase, a temporal control that prevents uncontrolled DNA degradation. Viral RNA transcripts probably tether the Csm complex to the viral genome, recruiting Cas10 ssDNA activity which is able to degrade DNA in the transcription bubble, spatially controlling the DNase activity. Functionally, a single-strand-specific endoribonuclease (ssRNase) that is approximately 1000-fold stimulated by cyclic oligoadenylate (cOA); although several species of cOA are synthesized by this organism only cyclic hexaadenylate (cA6) stimulates the ssRNase activity. Cleaves preferentially within GA or AA dinucleotides, although the presence of cA6 broadens the preference. The chain is CRISPR system endoribonuclease Csm6' from Streptococcus thermophilus.